We begin with the raw amino-acid sequence, 89 residues long: uncharacterized protein (89 aa).

The next 2 membrane-spanning stretches (helical) occupy residues 1-21 (MFLA…ISLI) and 28-48 (GISL…TIAA).

The protein resides in the cell membrane. This is an uncharacterized protein from Methanocaldococcus jannaschii (strain ATCC 43067 / DSM 2661 / JAL-1 / JCM 10045 / NBRC 100440) (Methanococcus jannaschii).